A 543-amino-acid polypeptide reads, in one-letter code: Glucose-6-phosphate isomerase (543 aa).

Glu-353 acts as the Proton donor in catalysis. Residues His-384 and Lys-512 contribute to the active site.

Belongs to the GPI family.

The protein resides in the cytoplasm. It catalyses the reaction alpha-D-glucose 6-phosphate = beta-D-fructose 6-phosphate. The protein operates within carbohydrate biosynthesis; gluconeogenesis. It participates in carbohydrate degradation; glycolysis; D-glyceraldehyde 3-phosphate and glycerone phosphate from D-glucose: step 2/4. Catalyzes the reversible isomerization of glucose-6-phosphate to fructose-6-phosphate. The sequence is that of Glucose-6-phosphate isomerase from Christiangramia forsetii (strain DSM 17595 / CGMCC 1.15422 / KT0803) (Gramella forsetii).